Here is a 579-residue protein sequence, read N- to C-terminus: Putative adenine deaminase OB0751 (579 aa).

It belongs to the metallo-dependent hydrolases superfamily. Adenine deaminase family.

It carries out the reaction adenine + H2O + H(+) = hypoxanthine + NH4(+). This is Putative adenine deaminase OB0751 from Oceanobacillus iheyensis (strain DSM 14371 / CIP 107618 / JCM 11309 / KCTC 3954 / HTE831).